The following is a 507-amino-acid chain: MVTIRADEISNIIRERIEQYNREVTIVNTGTVLQVGDGIARIHGLDEVMAGELVEFEEGTIGIALNLESNNVGVVLMGDGLLIQEGSSVKATGRIAQIPVSEAYLGRVINALAKPIDGRGEISASESRLIESPAPGIISRRSVYEPLQTGLIAIDSMIPIGRGQRELIIGDRQTGKTAVATDTILNQKGQNVICVYVAIGQKASSVAQVVTTFQEQGAMEYTIVVAETADSPATLQYLAPYTGAALAEYFMYRERHTSIIYDDPSKQAQAYRQMSLLLRRPPGREAYPGDVFYLHSRLLERAAKSSSRLGEGSMTALPIVETQSGDVSAYIPTNVISITDGQIFLSADLFNAGIRPAINVGISVSRVGSAAQIKAMKQVAGKSKLELAQFAELEAFAQFASDLDKATQNQLARGQRLRELLKQSQSTPLTVEDQIVTIYTGANGYLDPLEIGQVKKFLVQLRTYLKTNKPQLQEIISSTKTFTEQAEALLKEAIPEQIELFLLQEQT.

170-177 (GDRQTGKT) contacts ATP.

The protein belongs to the ATPase alpha/beta chains family. In terms of assembly, F-type ATPases have 2 components, CF(1) - the catalytic core - and CF(0) - the membrane proton channel. CF(1) has five subunits: alpha(3), beta(3), gamma(1), delta(1), epsilon(1). CF(0) has four main subunits: a, b, b' and c.

The protein resides in the plastid. It localises to the chloroplast thylakoid membrane. It carries out the reaction ATP + H2O + 4 H(+)(in) = ADP + phosphate + 5 H(+)(out). Its function is as follows. Produces ATP from ADP in the presence of a proton gradient across the membrane. The alpha chain is a regulatory subunit. This chain is ATP synthase subunit alpha, chloroplastic, found in Liriodendron tulipifera (Tuliptree).